A 71-amino-acid polypeptide reads, in one-letter code: Small ribosomal subunit protein bS21 (71 aa).

The span at 50-59 shows a compositional bias: basic residues; it reads AAAVKRHAKK. The tract at residues 50–71 is disordered; it reads AAAVKRHAKKVQREQRRAVRLY. Residues 60–71 are compositionally biased toward basic and acidic residues; the sequence is VQREQRRAVRLY.

The protein belongs to the bacterial ribosomal protein bS21 family.

The sequence is that of Small ribosomal subunit protein bS21 from Pseudomonas entomophila (strain L48).